Reading from the N-terminus, the 286-residue chain is 4-diphosphocytidyl-2-C-methyl-D-erythritol kinase (286 aa).

K8 is an active-site residue. 92–102 (PVSAGLAGGST) is an ATP binding site. Residue D134 is part of the active site.

This sequence belongs to the GHMP kinase family. IspE subfamily.

The enzyme catalyses 4-CDP-2-C-methyl-D-erythritol + ATP = 4-CDP-2-C-methyl-D-erythritol 2-phosphate + ADP + H(+). Its pathway is isoprenoid biosynthesis; isopentenyl diphosphate biosynthesis via DXP pathway; isopentenyl diphosphate from 1-deoxy-D-xylulose 5-phosphate: step 3/6. Catalyzes the phosphorylation of the position 2 hydroxy group of 4-diphosphocytidyl-2C-methyl-D-erythritol. In Caldicellulosiruptor bescii (strain ATCC BAA-1888 / DSM 6725 / KCTC 15123 / Z-1320) (Anaerocellum thermophilum), this protein is 4-diphosphocytidyl-2-C-methyl-D-erythritol kinase.